Here is a 697-residue protein sequence, read N- to C-terminus: MTTKAQSYLTHFRNIGIAAHIDAGKTTTTERILYYTGRTHNIGEVHDGAATMDWMEQERERGITITAAATTAKWKRSGTDQEYVVNIIDTPGHVDFTIEVERSMRVLDGAVAVFDSSQGVEPQSETVWRQADRYGVPRIAFSNKMDKTGASFELVLTDIKERLGAIPAPIQYPMGQENDFKGIIDIVRMRAHVYTNDLGTDIVESDIPAEFADKVAEMRAQLIEAAAEVDEDLMMMYLEGEEPSVEQLVSAIRKGTIEKKIFPVLCGSALKNKGVQLLLDAVVDYLPSPLEVPAIRGKVEDSEDTVEFPADPEGKLAALAFKIMADPYVGRLTFVRIYSGTLQSGSYVYNASKDKRDRVGRLLKMHANSREEVTELRAGELGAVIGLKDAGTGNTLIADGEDRVLLESIDVPEPVIKLAIEPKTKADQEKMGIGLQKLAEEDPTFRVESDQESGQTTISGMGELHLEILVDRLKREYKVEANVGAPQVAYRETITKAVDVEGKFVRQSGGRGQFGHVKIKAEPLEPGAGFVFENIVVGGTVPREFIGPAQKGIEEALQSGPMLGFPVVDMKVSLYDGSYHEVDSSEMAFKIAGSMALKEAVQKGAPAILEPIMRVEVTVPEDYMGDIIGDLNSRRGQIQGMEARGNAQIVKAFVPLSEMFGYATDMRSMTQGRASYSMFFDHYSQVPNNLAQQLMKK.

The region spanning Thr-10–Leu-290 is the tr-type G domain. GTP-binding positions include Ala-19 to Thr-26, Asp-89 to His-93, and Asn-143 to Asp-146.

The protein belongs to the TRAFAC class translation factor GTPase superfamily. Classic translation factor GTPase family. EF-G/EF-2 subfamily.

Its subcellular location is the cytoplasm. Catalyzes the GTP-dependent ribosomal translocation step during translation elongation. During this step, the ribosome changes from the pre-translocational (PRE) to the post-translocational (POST) state as the newly formed A-site-bound peptidyl-tRNA and P-site-bound deacylated tRNA move to the P and E sites, respectively. Catalyzes the coordinated movement of the two tRNA molecules, the mRNA and conformational changes in the ribosome. The protein is Elongation factor G of Deinococcus deserti (strain DSM 17065 / CIP 109153 / LMG 22923 / VCD115).